Reading from the N-terminus, the 191-residue chain is Threonylcarbamoyl-AMP synthase (191 aa).

In terms of domain architecture, YrdC-like spans 10 to 191 (PFRVRHAAAE…DGRSGAYLRR (182 aa)).

It belongs to the SUA5 family. TsaC subfamily.

The protein localises to the cytoplasm. It catalyses the reaction L-threonine + hydrogencarbonate + ATP = L-threonylcarbamoyladenylate + diphosphate + H2O. Required for the formation of a threonylcarbamoyl group on adenosine at position 37 (t(6)A37) in tRNAs that read codons beginning with adenine. Catalyzes the conversion of L-threonine, HCO(3)(-)/CO(2) and ATP to give threonylcarbamoyl-AMP (TC-AMP) as the acyladenylate intermediate, with the release of diphosphate. The protein is Threonylcarbamoyl-AMP synthase of Halorhodospira halophila (strain DSM 244 / SL1) (Ectothiorhodospira halophila (strain DSM 244 / SL1)).